Reading from the N-terminus, the 279-residue chain is Acetyl-coenzyme A carboxylase carboxyl transferase subunit beta (279 aa).

The CoA carboxyltransferase N-terminal domain maps to L23 to G279. Positions 27, 30, 46, and 49 each coordinate Zn(2+). The C4-type zinc-finger motif lies at C27–C49.

This sequence belongs to the AccD/PCCB family. As to quaternary structure, acetyl-CoA carboxylase is a heterohexamer composed of biotin carboxyl carrier protein (AccB), biotin carboxylase (AccC) and two subunits each of ACCase subunit alpha (AccA) and ACCase subunit beta (AccD). Zn(2+) serves as cofactor.

The protein localises to the cytoplasm. It carries out the reaction N(6)-carboxybiotinyl-L-lysyl-[protein] + acetyl-CoA = N(6)-biotinyl-L-lysyl-[protein] + malonyl-CoA. It functions in the pathway lipid metabolism; malonyl-CoA biosynthesis; malonyl-CoA from acetyl-CoA: step 1/1. Functionally, component of the acetyl coenzyme A carboxylase (ACC) complex. Biotin carboxylase (BC) catalyzes the carboxylation of biotin on its carrier protein (BCCP) and then the CO(2) group is transferred by the transcarboxylase to acetyl-CoA to form malonyl-CoA. This is Acetyl-coenzyme A carboxylase carboxyl transferase subunit beta from Chlorobaculum parvum (strain DSM 263 / NCIMB 8327) (Chlorobium vibrioforme subsp. thiosulfatophilum).